A 146-amino-acid polypeptide reads, in one-letter code: MRLFQLLFRASPATLLLVLCLQLGANKAQDNTRKIIIHNFDIPKSVRPNDEVTAVLAVQTELKECMVVKTYLISSIPLQGAFNYKYTACLCDDNPKTFYWDFYTNRTVQIAAVVDVIQELGICPDDAAVIPIKNNRFYTTEILKVE.

The signal sequence occupies residues 1–28 (MRLFQLLFRASPATLLLVLCLQLGANKA). Gln-29 is subject to Pyrrolidone carboxylic acid. Intrachain disulfides connect Cys-65–Cys-91 and Cys-89–Cys-123. N-linked (GlcNAc...) asparagine glycosylation is present at Asn-105.

It belongs to the PIP family. In terms of assembly, monomer. Interacts with AZGP1.

It is found in the secreted. This is Prolactin-inducible protein homolog (PIP) from Pan troglodytes (Chimpanzee).